Reading from the N-terminus, the 346-residue chain is Glucose-6-phosphatase 3 (346 aa).

Residues 1–25 (MESTLSAGIMMAEALQNQLPGLENM) lie on the Lumenal side of the membrane. A helical transmembrane segment spans residues 26 to 46 (WLWVTFLADPKNLFQFYFPAV). Residues 47-56 (YYASRRLGIS) lie on the Cytoplasmic side of the membrane. A helical membrane pass occupies residues 57–77 (LFWIAFITEWLNLVFKWFLFG). Topologically, residues 78–115 (DRPFWWVHESGYSAQTPVQIHQFPSSCETGPGSPSGHC) are lumenal. Position 79 (arginine 79) interacts with substrate. The active-site Proton donor is the histidine 114. Residues 116–135 (MITGAALWPVMIAISSQVAS) form a helical membrane-spanning segment. The Cytoplasmic segment spans residues 136–140 (QTRSP). Residues 141–162 (WVRVIPGLAYCTFLLAVGLSRV) form a helical membrane-spanning segment. Residue arginine 161 coordinates substrate. The Lumenal portion of the chain corresponds to 163–167 (FLLAH). The Nucleophile role is filled by histidine 167. The chain crosses the membrane as a helical span at residues 168 to 186 (FPHQVLAGLLAGVILGWLL). Residues 187-197 (SPRVPMERELS) are Cytoplasmic-facing. A helical transmembrane segment spans residues 198-218 (FYGLTALTLMLGASLMYWTLF). The Lumenal segment spans residues 219 to 254 (TLGLDLSWSINLASKWCDRPEWVLVDSRPFASLSRD). Residues 255-273 (SGSALGLGIALHTPCYAQI) traverse the membrane as a helical segment. At 274 to 283 (RRVHLGNGQK) the chain is on the cytoplasmic side. A helical transmembrane segment spans residues 284–304 (IACFVLAMGLLVFLEWLGHPP). The Lumenal segment spans residues 305–307 (QIS). The chain crosses the membrane as a helical span at residues 308–328 (LFYIFNFLKFTLWPCLVVALV). Topologically, residues 329–346 (PWMVHTLSAQEAPPIRSS) are cytoplasmic.

It belongs to the glucose-6-phosphatase family. As to expression, expressed in liver and kidney. It is the major glucose-6-phosphatase expressed in the small intestine.

It localises to the endoplasmic reticulum membrane. It carries out the reaction D-glucose 6-phosphate + H2O = D-glucose + phosphate. It participates in carbohydrate biosynthesis; gluconeogenesis. With respect to regulation, inhibited by vanadate. In terms of biological role, hydrolyzes glucose-6-phosphate to glucose in the endoplasmic reticulum. May form with the glucose-6-phosphate transporter (SLC37A4/G6PT) a ubiquitously expressed complex responsible for glucose production through glycogenolysis and gluconeogenesis. Probably required for normal neutrophil function. The sequence is that of Glucose-6-phosphatase 3 (G6pc3) from Rattus norvegicus (Rat).